The sequence spans 283 residues: Fructose-1,6-bisphosphatase class 1 (283 aa).

4 residues coordinate Mg(2+): glutamate 67, aspartate 86, leucine 88, and aspartate 89. Residues 89–92 (DGSS), tyrosine 195, and lysine 225 each bind substrate. Position 231 (glutamate 231) interacts with Mg(2+).

It belongs to the FBPase class 1 family. Homotetramer. Mg(2+) serves as cofactor.

It localises to the cytoplasm. The catalysed reaction is beta-D-fructose 1,6-bisphosphate + H2O = beta-D-fructose 6-phosphate + phosphate. The protein operates within carbohydrate biosynthesis; gluconeogenesis. This chain is Fructose-1,6-bisphosphatase class 1, found in Natronomonas pharaonis (strain ATCC 35678 / DSM 2160 / CIP 103997 / JCM 8858 / NBRC 14720 / NCIMB 2260 / Gabara) (Halobacterium pharaonis).